A 760-amino-acid polypeptide reads, in one-letter code: 5-methyltetrahydropteroyltriglutamate--homocysteine methyltransferase (760 aa).

Residues 17–20 and Lys118 each bind 5-methyltetrahydropteroyltri-L-glutamate; that span reads RELK. Residues 434-436 and Glu487 contribute to the L-homocysteine site; that span reads IGS. Residues 434-436 and Glu487 each bind L-methionine; that span reads IGS. 5-methyltetrahydropteroyltri-L-glutamate-binding positions include 518-519 and Trp564; that span reads RC. Position 602 (Asp602) interacts with L-homocysteine. Asp602 contacts L-methionine. A 5-methyltetrahydropteroyltri-L-glutamate-binding site is contributed by Glu608. Positions 644, 646, and 668 each coordinate Zn(2+). Residue His697 is the Proton donor of the active site. Zn(2+) is bound at residue Cys729.

This sequence belongs to the vitamin-B12 independent methionine synthase family. The cofactor is Zn(2+).

The enzyme catalyses 5-methyltetrahydropteroyltri-L-glutamate + L-homocysteine = tetrahydropteroyltri-L-glutamate + L-methionine. It participates in amino-acid biosynthesis; L-methionine biosynthesis via de novo pathway; L-methionine from L-homocysteine (MetE route): step 1/1. Catalyzes the transfer of a methyl group from 5-methyltetrahydrofolate to homocysteine resulting in methionine formation. The polypeptide is 5-methyltetrahydropteroyltriglutamate--homocysteine methyltransferase (Buchnera aphidicola subsp. Cinara cedri (strain Cc)).